The chain runs to 198 residues: Protein GrpE (198 aa).

This sequence belongs to the GrpE family. As to quaternary structure, homodimer.

It localises to the cytoplasm. Participates actively in the response to hyperosmotic and heat shock by preventing the aggregation of stress-denatured proteins, in association with DnaK and GrpE. It is the nucleotide exchange factor for DnaK and may function as a thermosensor. Unfolded proteins bind initially to DnaJ; upon interaction with the DnaJ-bound protein, DnaK hydrolyzes its bound ATP, resulting in the formation of a stable complex. GrpE releases ADP from DnaK; ATP binding to DnaK triggers the release of the substrate protein, thus completing the reaction cycle. Several rounds of ATP-dependent interactions between DnaJ, DnaK and GrpE are required for fully efficient folding. The polypeptide is Protein GrpE (Actinobacillus pleuropneumoniae serotype 7 (strain AP76)).